Here is a 261-residue protein sequence, read N- to C-terminus: Rho-related GTP-binding protein RhoU (261 aa).

The interval 1–48 (MAPQQGRPALPARCEPPAAPPVPPRRERGGRGARGPGVSGGRGRAGGA) is disordered. The span at 7–16 (RPALPARCEP) shows a compositional bias: low complexity. Residues 32 to 48 (GARGPGVSGGRGRAGGA) show a composition bias toward gly residues. GTP is bound by residues 59-66 (GDGAVGKT), 106-110 (DTAGQ), and 164-167 (TQSD). Glycyl lysine isopeptide (Lys-Gly) (interchain with G-Cter in ubiquitin) cross-links involve residues Lys-180 and Lys-251. Cys-259 carries the S-palmitoyl cysteine lipid modification.

The protein belongs to the small GTPase superfamily. Rho family. Interacts with PAK1. Interacts with PAK3. Interacts with ARHGAP30 in a GTP-independent manner. In its GTP-loaded conformation, interacts with ARHGAP31. Interacts with PTK2B/PYK2. Interacts with PAK4; interaction protects RHOU from ubiquitination and subsequent degradation. It depends on Mg(2+) as a cofactor. Tyrosine phosphorylated by SRC in response to PTK2B/PYK2 activation. In terms of processing, ubiquitinated. 'Lys-48'-linked ubiquitination at Lys-180 and Lys-251 by the ECS(RAB40A) complex leading to its degradation.

The protein resides in the cell membrane. Its subcellular location is the golgi apparatus membrane. It is found in the cell junction. It localises to the focal adhesion. The protein localises to the cell projection. The protein resides in the podosome. In terms of biological role, binds to and activates protein kinase PAK1. Plays a role in the regulation of cell morphology, cytoskeletal organization and focal adhesion assembly during cell migration. Also stimulates quiescent cells to reenter the cell cycle. Has no detectable GTPase activity but its high intrinsic guanine nucleotide exchange activity suggests it is constitutively GTP-bound. This chain is Rho-related GTP-binding protein RhoU, found in Mus musculus (Mouse).